A 361-amino-acid polypeptide reads, in one-letter code: 3-galactosyl-N-acetylglucosaminide 4-alpha-L-fucosyltransferase FUT3 (361 aa).

The Cytoplasmic portion of the chain corresponds to methionine 1 to arginine 15. Residues cysteine 16–leucine 34 traverse the membrane as a helical; Signal-anchor for type II membrane protein segment. Residues arginine 35–threonine 361 are Lumenal-facing. Residues aspartate 39–proline 58 are disordered. Asparagine 154 and asparagine 185 each carry an N-linked (GlcNAc...) asparagine glycan.

It belongs to the glycosyltransferase 10 family. Glycosylated. Highly expressed in stomach, colon, small intestine, lung and kidney and to a lesser extent in salivary gland, bladder, uterus and liver.

Its subcellular location is the golgi apparatus. It localises to the golgi stack membrane. It carries out the reaction a beta-D-galactosyl-(1-&gt;3)-N-acetyl-beta-D-glucosaminyl derivative + GDP-beta-L-fucose = a beta-D-galactosyl-(1-&gt;3)-[alpha-L-fucosyl-(1-&gt;4)]-N-acetyl-beta-D-glucosaminyl derivative + GDP + H(+). It catalyses the reaction an N-acetyl-alpha-neuraminyl-(2-&gt;3)-beta-D-galactosyl-(1-&gt;4)-N-acetyl-beta-D-glucosaminyl derivative + GDP-beta-L-fucose = an alpha-Neu5Ac-(2-&gt;3)-beta-D-Gal-(1-&gt;4)-[alpha-L-Fuc-(1-&gt;3)]-beta-D-GlcNAc derivative + GDP + H(+). The catalysed reaction is a beta-D-galactosyl-(1-&gt;4)-N-acetyl-beta-D-glucosaminyl derivative + GDP-beta-L-fucose = a beta-D-galactosyl-(1-&gt;4)-[alpha-L-fucosyl-(1-&gt;3)]-N-acetyl-beta-D-glucosaminyl derivative + GDP + H(+). The enzyme catalyses an alpha-Neu5Ac-(2-&gt;3)-beta-D-Gal-(1-&gt;4)-beta-D-GlcNAc-(1-&gt;3)-beta-D-Gal-(1-&gt;4)-[alpha-L-Fuc-(1-&gt;3)]-beta-D-GlcNAc derivative + GDP-beta-L-fucose = an alpha-Neu5Ac-(2-&gt;3)-beta-D-Gal-(1-&gt;4)-[alpha-L-Fuc-(1-&gt;3)]-beta-D-GlcNAc-(1-&gt;3)-beta-D-Gal-(1-&gt;4)-[alpha-L-Fuc-(1-&gt;3)]-beta-D-GlcNAc derivative + GDP + H(+). It carries out the reaction Lc4Cer + GDP-beta-L-fucose = a lactoside III(4)-a-Fuc-Lc4Cer + GDP + H(+). It catalyses the reaction a beta-D-Gal-(1-&gt;3)-beta-D-GlcNAc-(1-&gt;3)-beta-D-Gal-(1-&gt;4)-beta-D-Glc-(1&lt;-&gt;1')-Cer(d18:1(4E)) + GDP-beta-L-fucose = a III(4)-a-Fuc-Lc4Cer(d18:1(4E)) + GDP + H(+). The catalysed reaction is N-acetyl-alpha-neuraminosyl-(2-&gt;3)-beta-D-galactosyl-(1-&gt;3)-[N-acetyl-alpha-neuraminosyl-(2-&gt;6)]-N-acetyl-beta-D-glucosaminyl-(1-&gt;3)-beta-D-galactosyl-(1-&gt;4)-beta-D-glucosyl-(1&lt;-&gt;1')-N-acyl-sphing-4-enine + GDP-beta-L-fucose = N-acetyl-alpha-neuraminosyl-(2-&gt;3)-beta-D-galactosyl-(1-&gt;3)-alpha-L-fucosyl-(1-&gt;4)-[N-acetyl-alpha-neuraminosyl-(2-&gt;6)-N-acetyl-beta-D-glucosaminyl-(1-&gt;3)]-beta-D-galactosyl-(1-&gt;4)-beta-D-glucosyl-(1&lt;-&gt;1')-N-acyl-sphing-4-enine + GDP + H(+). The enzyme catalyses N-acetyl-alpha-neuraminosyl-(2-&gt;3)-beta-D-galactosyl-(1-&gt;3)-N-acetyl-beta-D-glucosaminyl-(1-&gt;3)-beta-D-galactosyl-(1-&gt;4)-beta-D-glucosyl-(1&lt;-&gt;1')-N-acyl-sphing-4-enine + GDP-beta-L-fucose = N-acetyl-alpha-neuraminosyl-(2-&gt;3)-beta-D-galactosyl-(1-&gt;3)-alpha-L-fucosyl-(1-&gt;4)-[N-acetyl-beta-D-glucosaminyl-(1-&gt;3)]-beta-D-galactosyl-(1-&gt;4)-beta-D-glucosyl-(1&lt;-&gt;1')-N-acyl-sphing-4-enine + GDP + H(+). It carries out the reaction beta-D-galactosyl-(1-&gt;3)-N-acetyl-D-glucosamine + GDP-beta-L-fucose = beta-D-galactosyl-(1-&gt;3)-[alpha-L-fucosyl-(1-&gt;4)]-N-acetyl-D-glucosamine + GDP + H(+). It catalyses the reaction alpha-L-Fuc-(1-&gt;2)-beta-D-Gal-(1-&gt;3)-D-GlcNAc + GDP-beta-L-fucose = alpha-L-Fuc-(1-&gt;2)-beta-D-Gal-(1-&gt;3)-[alpha-L-Fuc-(1-&gt;4)]-D-GlcNAc + GDP + H(+). The catalysed reaction is alpha-L-Fuc-(1-&gt;2)-beta-D-Gal-(1-&gt;4)-D-GlcNAc + GDP-beta-L-fucose = alpha-L-Fuc-(1-&gt;2)-beta-D-Gal-(1-&gt;4)-[alpha-L-Fuc-(1-&gt;3)]-D-GlcNAc + GDP + H(+). The enzyme catalyses beta-D-galactosyl-(1-&gt;4)-N-acetyl-D-glucosamine + GDP-beta-L-fucose = beta-D-galactosyl-(1-&gt;4)-[alpha-L-fucosyl-(1-&gt;3)]-N-acetyl-D-glucosamine + GDP + H(+). It carries out the reaction lactose + GDP-beta-L-fucose = beta-D-galactosyl-(1-&gt;4)-[alpha-L-fucosyl-(1-&gt;3)]-D-glucose + GDP + H(+). It catalyses the reaction an alpha-Neu5Ac-(2-&gt;3)-beta-D-Gal-(1-&gt;3)-D-GlcNAc derivative + GDP-beta-L-fucose = an alpha-Neu5Ac-(2-&gt;3)-beta-D-Gal-(1-&gt;3)-[alpha-L-Fuc-(1-&gt;4)]-beta-D-GlcNAc derivative + GDP + H(+). It participates in protein modification; protein glycosylation. Its function is as follows. Catalyzes the transfer of L-fucose, from a guanosine diphosphate-beta-L-fucose, to both the subterminal N-acetyl glucosamine (GlcNAc) of type 1 chain (beta-D-Gal-(1-&gt;3)-beta-D-GlcNAc) glycolipids and oligosaccharides via an alpha(1,4) linkage, and the subterminal glucose (Glc) or GlcNAc of type 2 chain (beta-D-Gal-(1-&gt;4)-beta-D-GlcNAc) oligosaccharides via an alpha(1,3) linkage, independently of the presence of terminal alpha-L-fucosyl-(1,2) moieties on the terminal galactose of these acceptors. Through its catalytic activity, participates in the synthesis of antigens of the Lewis blood group system, i.e. Lewis a (Le(a)), lewis b (Le(b)), Lewis x/SSEA-1 (Le(x)) and lewis y (Le(y)) antigens. Also catalyzes the transfer of L-fucose to subterminal GlcNAc of sialyl- and disialyl-lactotetraosylceramide to produce sialyl Lewis a (sLe(a)) and disialyl Lewis a via an alpha(1,4) linkage and therefore may regulate cell surface sLe(a) expression and consequently regulates adhesive properties to E-selectin, cell proliferation and migration. Catalyzes the transfer of an L-fucose to 3'-sialyl-N-acetyllactosamine by an alpha(1,3) linkage, which allows the formation of sialyl-Lewis x structure and therefore may regulate the sialyl-Lewis x surface antigen expression and consequently adhesive properties to E-selectin. Prefers type 1 chain over type 2 acceptors. Type 1 tetrasaccharide is a better acceptor than type 1 disaccharide suggesting that a beta anomeric configuration of GlcNAc in the substrate is preferred. Lewis-positive (Le(+)) individuals have an active enzyme while Lewis-negative (Le(-)) individuals have an inactive enzyme. This Homo sapiens (Human) protein is 3-galactosyl-N-acetylglucosaminide 4-alpha-L-fucosyltransferase FUT3.